A 129-amino-acid polypeptide reads, in one-letter code: Small ribosomal subunit protein uS11 (129 aa).

The protein belongs to the universal ribosomal protein uS11 family. As to quaternary structure, part of the 30S ribosomal subunit. Interacts with proteins S7 and S18. Binds to IF-3.

Its function is as follows. Located on the platform of the 30S subunit, it bridges several disparate RNA helices of the 16S rRNA. Forms part of the Shine-Dalgarno cleft in the 70S ribosome. This Escherichia fergusonii (strain ATCC 35469 / DSM 13698 / CCUG 18766 / IAM 14443 / JCM 21226 / LMG 7866 / NBRC 102419 / NCTC 12128 / CDC 0568-73) protein is Small ribosomal subunit protein uS11.